The primary structure comprises 455 residues: Tryptophan dimethylallyltransferase (455 aa).

L-tryptophan is bound by residues 79-80 (VL) and Glu-88. Substrate is bound by residues Arg-99, Lys-186, and Tyr-188. Residues Tyr-190 and Arg-256 each contribute to the L-tryptophan site. 7 residues coordinate substrate: Arg-269, Lys-271, Tyr-273, Gln-355, Tyr-357, Tyr-421, and Tyr-425.

It belongs to the tryptophan dimethylallyltransferase family. In terms of assembly, homodimer.

The enzyme catalyses L-tryptophan + dimethylallyl diphosphate = 4-(3-methylbut-2-enyl)-L-tryptophan + diphosphate. Its pathway is alkaloid biosynthesis; ergot alkaloid biosynthesis. Its function is as follows. Tryptophan dimethylallyltransferase; part of the gene cluster that mediates the biosynthesis of fungal ergot alkaloid. DmaW catalyzes the first step of ergot alkaloid biosynthesis by condensing dimethylallyl diphosphate (DMAP) and tryptophan to form 4-dimethylallyl-L-tryptophan. The second step is catalyzed by the methyltransferase easF that methylates 4-dimethylallyl-L-tryptophan in the presence of S-adenosyl-L-methionine, resulting in the formation of 4-dimethylallyl-L-abrine. The catalase easC and the FAD-dependent oxidoreductase easE then transform 4-dimethylallyl-L-abrine to chanoclavine-I which is further oxidized by easD in the presence of NAD(+), resulting in the formation of chanoclavine-I aldehyde. Agroclavine dehydrogenase easG then mediates the conversion of chanoclavine-I aldehyde to agroclavine via a non-enzymatic adduct reaction: the substrate is an iminium intermediate that is formed spontaneously from chanoclavine-I aldehyde in the presence of glutathione. Further conversion of agroclavine to paspalic acid is a two-step process involving oxidation of agroclavine to elymoclavine and of elymoclavine to paspalic acid, the second step being performed by the elymoclavine oxidase cloA. However, cloA does not encode a functional enzyme indicating that C.fusiformis terminates its ergot alkaloid pathway at elymoclavine. The protein is Tryptophan dimethylallyltransferase of Claviceps fusiformis (Ergot fungus).